The chain runs to 152 residues: Large ribosomal subunit protein bL9 (152 aa).

It belongs to the bacterial ribosomal protein bL9 family.

Binds to the 23S rRNA. The polypeptide is Large ribosomal subunit protein bL9 (Nocardia farcinica (strain IFM 10152)).